Reading from the N-terminus, the 255-residue chain is Thiazole synthase (255 aa).

Lysine 95 acts as the Schiff-base intermediate with DXP in catalysis. 1-deoxy-D-xylulose 5-phosphate contacts are provided by residues glycine 156, 182 to 183, and 204 to 205; these read AG and NT.

This sequence belongs to the ThiG family. In terms of assembly, homotetramer. Forms heterodimers with either ThiH or ThiS.

The protein resides in the cytoplasm. The enzyme catalyses [ThiS sulfur-carrier protein]-C-terminal-Gly-aminoethanethioate + 2-iminoacetate + 1-deoxy-D-xylulose 5-phosphate = [ThiS sulfur-carrier protein]-C-terminal Gly-Gly + 2-[(2R,5Z)-2-carboxy-4-methylthiazol-5(2H)-ylidene]ethyl phosphate + 2 H2O + H(+). It functions in the pathway cofactor biosynthesis; thiamine diphosphate biosynthesis. Catalyzes the rearrangement of 1-deoxy-D-xylulose 5-phosphate (DXP) to produce the thiazole phosphate moiety of thiamine. Sulfur is provided by the thiocarboxylate moiety of the carrier protein ThiS. In vitro, sulfur can be provided by H(2)S. The polypeptide is Thiazole synthase (Aeromonas salmonicida (strain A449)).